A 215-amino-acid chain; its full sequence is Pyrrolidone-carboxylate peptidase (215 aa).

Active-site residues include E78, C141, and H165.

Belongs to the peptidase C15 family. In terms of assembly, homotetramer.

It is found in the cytoplasm. The enzyme catalyses Release of an N-terminal pyroglutamyl group from a polypeptide, the second amino acid generally not being Pro.. Removes 5-oxoproline from various penultimate amino acid residues except L-proline. This chain is Pyrrolidone-carboxylate peptidase, found in Streptococcus pyogenes serotype M18 (strain MGAS8232).